Reading from the N-terminus, the 150-residue chain is Large ribosomal subunit protein bL9 (150 aa).

The protein belongs to the bacterial ribosomal protein bL9 family.

Functionally, binds to the 23S rRNA. This chain is Large ribosomal subunit protein bL9, found in Cupriavidus metallidurans (strain ATCC 43123 / DSM 2839 / NBRC 102507 / CH34) (Ralstonia metallidurans).